A 250-amino-acid chain; its full sequence is 5-oxoprolinase subunit A (250 aa).

It belongs to the LamB/PxpA family. Forms a complex composed of PxpA, PxpB and PxpC.

The catalysed reaction is 5-oxo-L-proline + ATP + 2 H2O = L-glutamate + ADP + phosphate + H(+). Functionally, catalyzes the cleavage of 5-oxoproline to form L-glutamate coupled to the hydrolysis of ATP to ADP and inorganic phosphate. This is 5-oxoprolinase subunit A from Staphylococcus haemolyticus (strain JCSC1435).